The sequence spans 259 residues: Protein-L-isoaspartate O-methyltransferase (259 aa).

Residues 1–25 (MRKRVDPPAGGRLAPGITPANSNTR) are disordered. The active site involves serine 107.

The protein belongs to the methyltransferase superfamily. L-isoaspartyl/D-aspartyl protein methyltransferase family.

Its subcellular location is the cytoplasm. It carries out the reaction [protein]-L-isoaspartate + S-adenosyl-L-methionine = [protein]-L-isoaspartate alpha-methyl ester + S-adenosyl-L-homocysteine. In terms of biological role, catalyzes the methyl esterification of L-isoaspartyl residues in peptides and proteins that result from spontaneous decomposition of normal L-aspartyl and L-asparaginyl residues. It plays a role in the repair and/or degradation of damaged proteins. The chain is Protein-L-isoaspartate O-methyltransferase from Bordetella bronchiseptica (strain ATCC BAA-588 / NCTC 13252 / RB50) (Alcaligenes bronchisepticus).